The following is a 1128-amino-acid chain: Large proline-rich protein BAG6 (1128 aa).

At Met1 the chain carries N-acetylmethionine. Positions 17–92 constitute a Ubiquitin-like domain; sequence LEVLVKTLDS…HLVERAPPQT (76 aa). Disordered regions lie at residues 87-126, 185-267, 380-435, 456-523, and 555-598; these read RAPP…SVHD, CRGG…NHPS, VTMT…AASH, IQDS…ALPG, and PGMA…SASD. Positions 95–108 are enriched in low complexity; the sequence is PSGASSGTGSASAT. Ser96 is modified (phosphoserine). A Phosphothreonine modification is found at Thr117. Over residues 189 to 201 the composition is skewed to polar residues; sequence SQAQHSQPPSQMP. Repeat 1 spans residues 236 to 265; the sequence is RASAQSPGLSPSGPAPAGPTPAPETNAPNH. Positions 236-630 are 4 X 29 AA approximate repeats; it reads RASAQSPGLS…MTSPTITVAM (395 aa). The segment covering 238–247 has biased composition (low complexity); the sequence is SAQSPGLSPS. 2 stretches are compositionally biased toward pro residues: residues 248–257 and 388–402; these read GPAPAGPTPA and RPPP…PPGP. The segment covering 403–412 has biased composition (low complexity); the sequence is GQASSLAPSS. Residues 410–438 form repeat 2; the sequence is PSSTTVESSTEGAPPPGPAPPPAASHPRV. Composition is skewed to pro residues over residues 422-433 and 502-515; these read APPPGPAPPPAA and PTPP…PGGP. Residues 564-581 are compositionally biased toward low complexity; sequence ATASASAGTTNTATTAGP. Repeat copies occupy residues 569 to 596 and 602 to 630. A compositionally biased stretch (pro residues) spans 583 to 594; that stretch reads PGGPAQPPPPQP. Disordered regions lie at residues 648–689 and 939–1128; these read QTAA…GLGP and VGDP…AEDP. Pro residues predominate over residues 652-677; that stretch reads PPAPPPPPPPPPPAPEQQTAPPPGSP. The segment covering 678–688 has biased composition (gly residues); sequence PGGAGSPGGLG. Ser960 and Ser969 each carry phosphoserine. Positions 999 to 1016 are enriched in low complexity; the sequence is AAAETEPWAAAVPPEWVP. The segment at 1006–1036 is required for interaction with GET4; it reads WAAAVPPEWVPIIQQDIQSQRKVKPQPPLSD. Positions 1008 to 1050 match the Nuclear localization site motif; it reads AAVPPEWVPIIQQDIQSQRKVKPQPPLSDAYLSGMPAKRRKTM. Residues 1018-1128 form a sufficient for the delivery of client proteins to the endoplasmic reticulum region; that stretch reads IQQDIQSQRK…NAHRAFAEDP (111 aa). Phosphothreonine is present on Thr1049. The tract at residues 1054 to 1111 is BAG-similar domain, required and sufficient for interaction with UBL4A; sequence GPQLLLSEAVSRAAKAAGARPLTSPESLSRDLEAPEVQESYRQQLRADIQKRLQEDPN. Residues 1062-1072 show a composition bias toward low complexity; sequence AVSRAAKAAGA. Residues Ser1077 and Ser1113 each carry the phosphoserine modification.

Component of the BAG6/BAT3 complex, also named BAT3 complex, at least composed of BAG6, UBL4A and GET4/TRC35. Interacts with GET4; the interaction is direct and localizes BAG6 in the cytosol. Interacts with UBL4A; the interaction is direct and required for UBL4A protein stability. Interacts with AIFM1. Interacts with HSPA2. Interacts with CTCFL. Interacts with p300/EP300. Interacts (via ubiquitin-like domain) with RNF126; required for BAG6-dependent ubiquitination of proteins mislocalized to the cytosol. Interacts (via ubiquitin-like domain) with SGTA; SGTA competes with RNF126 by binding the same region of BAG6, thereby promoting deubiquitination of BAG6-target proteins and rescuing them from degradation. Interacts with ricin A chain. Interacts with VCP and AMFR; both form the VCP/p97-AMFR/gp78 complex. Interacts with SYVN1. Interacts with USP13; the interaction is direct and may mediate UBL4A deubiquitination. Interacts with ZFAND2B. Interacts with KPNA2. Interacts with UBQLN4. In terms of processing, ricin can induce a cleavage by the caspase CASP3. The released C-terminal peptide induces apoptosis.

It is found in the cytoplasm. The protein resides in the cytosol. The protein localises to the nucleus. Its subcellular location is the secreted. It localises to the extracellular exosome. ATP-independent molecular chaperone preventing the aggregation of misfolded and hydrophobic patches-containing proteins. Functions as part of a cytosolic protein quality control complex, the BAG6/BAT3 complex, which maintains these client proteins in a soluble state and participates in their proper delivery to the endoplasmic reticulum or alternatively can promote their sorting to the proteasome where they undergo degradation. The BAG6/BAT3 complex is involved in the post-translational delivery of tail-anchored/type II transmembrane proteins to the endoplasmic reticulum membrane. Recruited to ribosomes, it interacts with the transmembrane region of newly synthesized tail-anchored proteins and together with SGTA and ASNA1 mediates their delivery to the endoplasmic reticulum. Client proteins that cannot be properly delivered to the endoplasmic reticulum are ubiquitinated by RNF126, an E3 ubiquitin-protein ligase associated with BAG6 and are sorted to the proteasome. SGTA which prevents the recruitment of RNF126 to BAG6 may negatively regulate the ubiquitination and the proteasomal degradation of client proteins. Similarly, the BAG6/BAT3 complex also functions as a sorting platform for proteins of the secretory pathway that are mislocalized to the cytosol either delivering them to the proteasome for degradation or to the endoplasmic reticulum. The BAG6/BAT3 complex also plays a role in the endoplasmic reticulum-associated degradation (ERAD), a quality control mechanism that eliminates unwanted proteins of the endoplasmic reticulum through their retrotranslocation to the cytosol and their targeting to the proteasome. It maintains these retrotranslocated proteins in an unfolded yet soluble state condition in the cytosol to ensure their proper delivery to the proteasome. BAG6 is also required for selective ubiquitin-mediated degradation of defective nascent chain polypeptides by the proteasome. In this context, it may participate in the production of antigenic peptides and play a role in antigen presentation in immune response. BAG6 is also involved in endoplasmic reticulum stress-induced pre-emptive quality control, a mechanism that selectively attenuates the translocation of newly synthesized proteins into the endoplasmic reticulum and reroutes them to the cytosol for proteasomal degradation. BAG6 may ensure the proper degradation of these proteins and thereby protects the endoplasmic reticulum from protein overload upon stress. By inhibiting the polyubiquitination and subsequent proteasomal degradation of HSPA2 it may also play a role in the assembly of the synaptonemal complex during spermatogenesis. Also positively regulates apoptosis by interacting with and stabilizing the proapoptotic factor AIFM1. By controlling the steady-state expression of the IGF1R receptor, indirectly regulates the insulin-like growth factor receptor signaling pathway. Functionally, involved in DNA damage-induced apoptosis: following DNA damage, accumulates in the nucleus and forms a complex with p300/EP300, enhancing p300/EP300-mediated p53/TP53 acetylation leading to increase p53/TP53 transcriptional activity. When nuclear, may also act as a component of some chromatin regulator complex that regulates histone 3 'Lys-4' dimethylation (H3K4me2). In terms of biological role, released extracellularly via exosomes, it is a ligand of the natural killer/NK cells receptor NCR3 and stimulates NK cells cytotoxicity. It may thereby trigger NK cells cytotoxicity against neighboring tumor cells and immature myeloid dendritic cells (DC). Its function is as follows. May mediate ricin-induced apoptosis. The protein is Large proline-rich protein BAG6 of Sus scrofa (Pig).